Consider the following 151-residue polypeptide: Transcriptional repressor NrdR (151 aa).

The segment at 3-34 is a zinc-finger region; it reads CPYCAYGESKVVDSRSTEDGSSIRRRRECLKC. Positions 49-139 constitute an ATP-cone domain; it reads ILVIKKNMSR…VYRQFKDINT (91 aa).

The protein belongs to the NrdR family. The cofactor is Zn(2+).

Functionally, negatively regulates transcription of bacterial ribonucleotide reductase nrd genes and operons by binding to NrdR-boxes. This Clostridium botulinum (strain 657 / Type Ba4) protein is Transcriptional repressor NrdR.